A 603-amino-acid polypeptide reads, in one-letter code: Phosphogluconate dehydratase (603 aa).

Positions 154 and 221 each coordinate [4Fe-4S] cluster.

Belongs to the IlvD/Edd family. [4Fe-4S] cluster is required as a cofactor.

It catalyses the reaction 6-phospho-D-gluconate = 2-dehydro-3-deoxy-6-phospho-D-gluconate + H2O. Its pathway is carbohydrate metabolism; Entner-Doudoroff pathway. Catalyzes the dehydration of 6-phospho-D-gluconate to 2-dehydro-3-deoxy-6-phospho-D-gluconate. This Escherichia coli O157:H7 protein is Phosphogluconate dehydratase.